Here is a 74-residue protein sequence, read N- to C-terminus: uncharacterized protein (74 aa).

This is an uncharacterized protein from Escherichia coli (strain K12).